A 213-amino-acid polypeptide reads, in one-letter code: tRNA (guanine-N(7)-)-methyltransferase (213 aa).

S-adenosyl-L-methionine contacts are provided by glutamate 43, aspartate 68, asparagine 95, and asparagine 117. Substrate contacts are provided by residues aspartate 153 and 190 to 193 (TEYE).

It belongs to the class I-like SAM-binding methyltransferase superfamily. TrmB family.

The catalysed reaction is guanosine(46) in tRNA + S-adenosyl-L-methionine = N(7)-methylguanosine(46) in tRNA + S-adenosyl-L-homocysteine. The protein operates within tRNA modification; N(7)-methylguanine-tRNA biosynthesis. Catalyzes the formation of N(7)-methylguanine at position 46 (m7G46) in tRNA. This Desulfitobacterium hafniense (strain DSM 10664 / DCB-2) protein is tRNA (guanine-N(7)-)-methyltransferase.